We begin with the raw amino-acid sequence, 547 residues long: Chaperonin GroEL (547 aa).

Residues 30 to 33, Lys-51, 87 to 91, Gly-415, 479 to 481, and Asp-495 contribute to the ATP site; these read TLGP, DGTTT, and NAA.

This sequence belongs to the chaperonin (HSP60) family. Forms a cylinder of 14 subunits composed of two heptameric rings stacked back-to-back. Interacts with the co-chaperonin GroES.

It localises to the cytoplasm. The enzyme catalyses ATP + H2O + a folded polypeptide = ADP + phosphate + an unfolded polypeptide.. Its function is as follows. Together with its co-chaperonin GroES, plays an essential role in assisting protein folding. The GroEL-GroES system forms a nano-cage that allows encapsulation of the non-native substrate proteins and provides a physical environment optimized to promote and accelerate protein folding. The sequence is that of Chaperonin GroEL from Cupriavidus metallidurans (strain ATCC 43123 / DSM 2839 / NBRC 102507 / CH34) (Ralstonia metallidurans).